The following is a 557-amino-acid chain: MPDNRRSQAITKGAKRAPNRAMLRAVGFGDGDFDKPIVGIANGFSTITPCNMGLDTLAKCAEHALKNAGAMPQMFGTITVSDGISMGTEGMKYSLVSREVIADSIETCVQAESMDGVIAIGGCDKNMPGALIALARLNVPSIFVYGGTIKPGHYQGRDLTIVSAFEAVGQHSAHKIDDQELLEVERHACPGAGSCGGMYTANTMSSAIEAMGMSLPHSSTMAAEDEEKRISATRSAEVLVEAIKKQILPRSLITRKSLENAVTVVMAVGGSTNAVLHLLAIAHAAEVDFHIDDFEAIRARVPVLCDLKPSGRYVATDLHRAGGIPQVMKMLLVHGLLHGDCLTISGQTIAEVLKDIPEQPRADQNVIRTWDNPVYEQGHLAILKGNLSPEGAVAKISGVKNPNITGPARVFESEETCMTAILDRKIKPGDVVVIRYEGPRGGPGMREMLSPTSALIGEGLGDSVGLITDGRFSGGTYGMVVGHVAPEAYAGGVIALVEEGDSITIDAHRRLLQLNVSETELERRRAAWQPPAPRYTRGVLAKYAKLVSTASRGAVTD.

Cys-50 contacts [2Fe-2S] cluster. Mg(2+) is bound at residue Asp-82. Position 123 (Cys-123) interacts with [2Fe-2S] cluster. The Mg(2+) site is built by Asp-124 and Lys-125. Lys-125 is subject to N6-carboxylysine. Cys-195 is a [2Fe-2S] cluster binding site. A Mg(2+)-binding site is contributed by Glu-447. Ser-473 serves as the catalytic Proton acceptor.

It belongs to the IlvD/Edd family. Homodimer. The cofactor is [2Fe-2S] cluster. Mg(2+) is required as a cofactor.

The catalysed reaction is (2R)-2,3-dihydroxy-3-methylbutanoate = 3-methyl-2-oxobutanoate + H2O. It carries out the reaction (2R,3R)-2,3-dihydroxy-3-methylpentanoate = (S)-3-methyl-2-oxopentanoate + H2O. It participates in amino-acid biosynthesis; L-isoleucine biosynthesis; L-isoleucine from 2-oxobutanoate: step 3/4. It functions in the pathway amino-acid biosynthesis; L-valine biosynthesis; L-valine from pyruvate: step 3/4. Its function is as follows. Functions in the biosynthesis of branched-chain amino acids. Catalyzes the dehydration of (2R,3R)-2,3-dihydroxy-3-methylpentanoate (2,3-dihydroxy-3-methylvalerate) into 2-oxo-3-methylpentanoate (2-oxo-3-methylvalerate) and of (2R)-2,3-dihydroxy-3-methylbutanoate (2,3-dihydroxyisovalerate) into 2-oxo-3-methylbutanoate (2-oxoisovalerate), the penultimate precursor to L-isoleucine and L-valine, respectively. The polypeptide is Dihydroxy-acid dehydratase (Nitrosomonas eutropha (strain DSM 101675 / C91 / Nm57)).